Reading from the N-terminus, the 953-residue chain is Translation initiation factor IF-2 (953 aa).

Disordered stretches follow at residues 52 to 241 (KASK…QQEA) and 279 to 363 (TKLK…TERK). Composition is skewed to basic and acidic residues over residues 80 to 89 (TGSEHVEKTQ), 98 to 111 (FKAE…EQAA), and 140 to 188 (QGDK…ENHK). Over residues 191–207 (RFTNQKKQGRQEPQSKS) the composition is skewed to polar residues. A compositionally biased stretch (basic and acidic residues) spans 229-241 (RQSETRFRAQQEA). A compositionally biased stretch (polar residues) spans 282–291 (KSSNISAKST). Residues 300–317 (ARPEKNRELTHHSQEGQK) show a composition bias toward basic and acidic residues. Over residues 322-338 (SWNSQNQVRNQKNSNWN) the composition is skewed to low complexity. Residues 339 to 348 (KNKKTKKGKN) show a composition bias toward basic residues. A tr-type G domain is found at 454-623 (ERAPVVTIMG…LLVAEVEELK (170 aa)). Positions 463–470 (GHVDHGKT) are G1. Position 463 to 470 (463 to 470 (GHVDHGKT)) interacts with GTP. The interval 488–492 (GITQH) is G2. Residues 509–512 (DTPG) form a G3 region. GTP-binding positions include 509–513 (DTPGH) and 563–566 (NKID). The tract at residues 563–566 (NKID) is G4. Residues 599-601 (SAK) are G5.

This sequence belongs to the TRAFAC class translation factor GTPase superfamily. Classic translation factor GTPase family. IF-2 subfamily.

The protein localises to the cytoplasm. Functionally, one of the essential components for the initiation of protein synthesis. Protects formylmethionyl-tRNA from spontaneous hydrolysis and promotes its binding to the 30S ribosomal subunits. Also involved in the hydrolysis of GTP during the formation of the 70S ribosomal complex. The chain is Translation initiation factor IF-2 from Streptococcus pyogenes serotype M4 (strain MGAS10750).